The following is a 249-amino-acid chain: 5'-nucleotidase SurE (249 aa).

Asp-8, Asp-9, Ser-39, and Asn-91 together coordinate a divalent metal cation.

This sequence belongs to the SurE nucleotidase family. The cofactor is a divalent metal cation.

The protein resides in the cytoplasm. The catalysed reaction is a ribonucleoside 5'-phosphate + H2O = a ribonucleoside + phosphate. Functionally, nucleotidase that shows phosphatase activity on nucleoside 5'-monophosphates. This chain is 5'-nucleotidase SurE, found in Pseudomonas syringae pv. syringae (strain B728a).